The chain runs to 172 residues: Melanocortin-2 receptor accessory protein (172 aa).

The helical transmembrane segment at 38 to 58 (IVIAFWVSLAAFVVLLFLILL) threads the bilayer. Disordered stretches follow at residues 105–130 (QAQASSVEPGSRTGPDQPLRQESSST) and 152–172 (PLVRSKPSEPPPGDRTSQLQS).

Belongs to the MRAP family. Homodimer and heterodimer. Forms antiparallel homodimers and heterodimers with MRAP2. Interacts with MC1R, MC2R, MC3R, MC4R and MC5R.

The protein resides in the cell membrane. Its subcellular location is the endoplasmic reticulum membrane. Its function is as follows. Modulator of melanocortin receptors (MC1R, MC2R, MC3R, MC4R and MC5R). Acts by increasing ligand-sensitivity of melanocortin receptors and enhancing generation of cAMP by the receptors. Required both for MC2R trafficking to the cell surface of adrenal cells and for signaling in response to corticotropin (ACTH). May be involved in the intracellular trafficking pathways in adipocyte cells. In Pan troglodytes (Chimpanzee), this protein is Melanocortin-2 receptor accessory protein (MRAP).